A 400-amino-acid chain; its full sequence is Argininosuccinate synthase (400 aa).

ATP is bound by residues 10 to 18 and Ala38; that span reads AYSGGVDTS. Position 89 (Tyr89) interacts with L-citrulline. Gly119 is a binding site for ATP. 3 residues coordinate L-aspartate: Thr121, Asn125, and Asp126. Asn125 provides a ligand contact to L-citrulline. Positions 129, 177, 262, and 274 each coordinate L-citrulline.

Belongs to the argininosuccinate synthase family. Type 1 subfamily. In terms of assembly, homotetramer.

It is found in the cytoplasm. It catalyses the reaction L-citrulline + L-aspartate + ATP = 2-(N(omega)-L-arginino)succinate + AMP + diphosphate + H(+). Its pathway is amino-acid biosynthesis; L-arginine biosynthesis; L-arginine from L-ornithine and carbamoyl phosphate: step 2/3. The chain is Argininosuccinate synthase from Trichodesmium erythraeum (strain IMS101).